We begin with the raw amino-acid sequence, 140 residues long: Putative pre-16S rRNA nuclease (140 aa).

It belongs to the YqgF nuclease family.

It is found in the cytoplasm. In terms of biological role, could be a nuclease involved in processing of the 5'-end of pre-16S rRNA. In Yersinia enterocolitica serotype O:8 / biotype 1B (strain NCTC 13174 / 8081), this protein is Putative pre-16S rRNA nuclease.